We begin with the raw amino-acid sequence, 178 residues long: ATP-dependent protease subunit HslV (178 aa).

Residue T7 is part of the active site. G162, C165, and T168 together coordinate Na(+).

The protein belongs to the peptidase T1B family. HslV subfamily. As to quaternary structure, a double ring-shaped homohexamer of HslV is capped on each side by a ring-shaped HslU homohexamer. The assembly of the HslU/HslV complex is dependent on binding of ATP.

Its subcellular location is the cytoplasm. It carries out the reaction ATP-dependent cleavage of peptide bonds with broad specificity.. With respect to regulation, allosterically activated by HslU binding. Protease subunit of a proteasome-like degradation complex believed to be a general protein degrading machinery. The chain is ATP-dependent protease subunit HslV from Cupriavidus metallidurans (strain ATCC 43123 / DSM 2839 / NBRC 102507 / CH34) (Ralstonia metallidurans).